Reading from the N-terminus, the 274-residue chain is Ribosomal RNA small subunit methyltransferase A (274 aa).

S-adenosyl-L-methionine contacts are provided by Asn26, Leu28, Gly53, Glu74, Asp94, and Asn114.

This sequence belongs to the class I-like SAM-binding methyltransferase superfamily. rRNA adenine N(6)-methyltransferase family. RsmA subfamily.

It is found in the cytoplasm. It carries out the reaction adenosine(1518)/adenosine(1519) in 16S rRNA + 4 S-adenosyl-L-methionine = N(6)-dimethyladenosine(1518)/N(6)-dimethyladenosine(1519) in 16S rRNA + 4 S-adenosyl-L-homocysteine + 4 H(+). Specifically dimethylates two adjacent adenosines (A1518 and A1519) in the loop of a conserved hairpin near the 3'-end of 16S rRNA in the 30S particle. May play a critical role in biogenesis of 30S subunits. The chain is Ribosomal RNA small subunit methyltransferase A from Bdellovibrio bacteriovorus (strain ATCC 15356 / DSM 50701 / NCIMB 9529 / HD100).